The following is a 306-amino-acid chain: 4-hydroxybenzoate geranyltransferase 2 (306 aa).

Transmembrane regions (helical) follow at residues 38–58 (IGSWLLAWPAFWSVALIADLG), 61–81 (PKMLAIFGWWAVWIRGAGCTI), 119–139 (LFIGLGVLYQFNILTLALAIV), 153–173 (ITYWPQAFLGVMISWGALLGS), 178–198 (GSVVPSIAYPLYISSFFWTLV), 229–249 (IWITWFGIGCIGALLLGGFIV), 251–271 (IGLPYYVFLAIATGQLIWQIF), and 285–305 (FVSNQWFGAIIFTGILVGRLF).

Belongs to the UbiA prenyltransferase family. Requires Mg(2+) as cofactor. In terms of tissue distribution, expressed only in roots.

It localises to the endoplasmic reticulum membrane. It catalyses the reaction 4-hydroxybenzoate + (2E)-geranyl diphosphate = 3-geranyl-4-hydroxybenzoate + diphosphate. In terms of biological role, prenyltransferase involved in the biosynthesis of shikonin, a naphthoquinone secondary metabolite. Could accept only geranyl diphosphate and not dimethylallyl diphosphate, farnesyl diphosphate, or geranylgeranyl diphosphate as substrate. The chain is 4-hydroxybenzoate geranyltransferase 2 (PGT-2) from Lithospermum erythrorhizon (Purple gromwell).